A 293-amino-acid chain; its full sequence is Peptidoglycan deacetylase (293 aa).

Zn(2+) contacts are provided by Asp-14, His-86, and His-90. Positions 29–276 (PDDISRGLFA…INKHEGVRWV (248 aa)) constitute a NodB homology domain.

It belongs to the polysaccharide deacetylase family. In terms of assembly, homotetramer.

The catalysed reaction is Deacetylation of xylans and xylo-oligosaccharides.. Functionally, catalyzes the N-deacetylation of peptidoglycan (PG), an important mechanism that appears to confer lysozyme resistance and to mitigate host immune detection; this likely contributes to pathogen persistence in the host. The exact nature of the residue in PG that is deacetylated has not been determined. Is also able to catalyze the deacetylation of acetylated xylan, and, to a lesser extent, that of chitin and chitosan. Therefore, this enzyme might play a role during infection, considering that xylan-containing carbohydrate structures are among those commonly consumed by humans. This Helicobacter pylori (strain ATCC 700392 / 26695) (Campylobacter pylori) protein is Peptidoglycan deacetylase (pgdA).